We begin with the raw amino-acid sequence, 208 residues long: Small ribosomal subunit protein bS6 (208 aa).

2 disordered regions span residues 121-143 (SENN…KPRL) and 185-208 (NQQT…GAKP). Over residues 185 to 195 (NQQTSQANNNQ) the composition is skewed to low complexity.

This sequence belongs to the bacterial ribosomal protein bS6 family.

Functionally, binds together with bS18 to 16S ribosomal RNA. The polypeptide is Small ribosomal subunit protein bS6 (rpsF) (Mycoplasma genitalium (strain ATCC 33530 / DSM 19775 / NCTC 10195 / G37) (Mycoplasmoides genitalium)).